A 380-amino-acid polypeptide reads, in one-letter code: Protein Wnt-5a (380 aa).

Positions 1–37 are cleaved as a signal peptide; it reads MKKPIGILSPGVALGTAGGAMSSKFFLMALATFFSFA. Residues 38-61 constitute a propeptide that is removed on maturation; that stretch reads QVVIEANSWWSLGMNNPVQMSEVH. A disulfide bridge connects residues Cys104 and Cys115. N-linked (GlcNAc...) asparagine glycosylation is found at Asn114 and Asn120. 10 disulfide bridges follow: Cys154/Cys162, Cys164/Cys182, Cys238/Cys252, Cys240/Cys247, Cys309/Cys340, Cys325/Cys335, Cys339/Cys379, Cys355/Cys370, Cys357/Cys367, and Cys362/Cys363. Residue Ser244 is the site of O-palmitoleoyl serine; by PORCN attachment. N-linked (GlcNAc...) asparagine glycans are attached at residues Asn312 and Asn326.

This sequence belongs to the Wnt family. As to quaternary structure, forms a soluble 1:1 complex with AFM; this prevents oligomerization and is required for prolonged biological activity. The complex with AFM may represent the physiological form in body fluids. Homooligomer; disulfide-linked, leading to inactivation (in vitro). Interacts with PORCN. Interacts with WLS. Interacts with glypican GCP3. Interacts with PKD1 (via extracellular domain). Interacts with TMEM67. Post-translationally, glycosylation is necessary for secretion but not for activity. In terms of processing, palmitoleoylation is required for efficient binding to frizzled receptors. Depalmitoleoylation leads to Wnt signaling pathway inhibition. Proteolytic processing by TIKI1 and TIKI2 promotes oxidation and formation of large disulfide-bond oligomers, leading to inactivation of WNT5A.

It is found in the secreted. It localises to the extracellular space. The protein resides in the extracellular matrix. In terms of biological role, ligand for members of the frizzled family of seven transmembrane receptors. Can activate or inhibit canonical Wnt signaling, depending on receptor context. In the presence of FZD4, activates beta-catenin signaling. In the presence of ROR2, inhibits the canonical Wnt pathway by promoting beta-catenin degradation through a GSK3-independent pathway which involves down-regulation of beta-catenin-induced reporter gene expression. Suppression of the canonical pathway allows chondrogenesis to occur and inhibits tumor formation. Stimulates cell migration. Decreases proliferation, migration, invasiveness and clonogenicity of carcinoma cells and may act as a tumor suppressor. Mediates motility of melanoma cells. Required during embryogenesis for extension of the primary anterior-posterior axis and for outgrowth of limbs and the genital tubercle. Inhibits type II collagen expression in chondrocytes. This is Protein Wnt-5a (Wnt5a) from Rattus norvegicus (Rat).